A 156-amino-acid chain; its full sequence is Small ribosomal subunit protein uS7 (156 aa).

This sequence belongs to the universal ribosomal protein uS7 family. Part of the 30S ribosomal subunit. Contacts proteins S9 and S11.

In terms of biological role, one of the primary rRNA binding proteins, it binds directly to 16S rRNA where it nucleates assembly of the head domain of the 30S subunit. Is located at the subunit interface close to the decoding center, probably blocks exit of the E-site tRNA. In Rubrobacter xylanophilus (strain DSM 9941 / JCM 11954 / NBRC 16129 / PRD-1), this protein is Small ribosomal subunit protein uS7.